Consider the following 36-residue polypeptide: Probable non-specific lipid-transfer protein (36 aa).

Belongs to the plant LTP family. In terms of processing, phosphorylated by Ca(2+)-dependent protein kinase.

In terms of biological role, plant non-specific lipid-transfer proteins transfer phospholipids as well as galactolipids across membranes. May play a role in wax or cutin deposition in the cell walls of expanding epidermal cells and certain secretory tissues. In Pinus pinea (Italian stone pine), this protein is Probable non-specific lipid-transfer protein.